Here is a 125-residue protein sequence, read N- to C-terminus: Basic leucine zipper transcriptional factor ATF-like (125 aa).

Low complexity predominate over residues 1-14; the sequence is MPHSSDSSDSSFSR. The segment at 1 to 58 is disordered; the sequence is MPHSSDSSDSSFSRSPPPGKQDSSDDVRKVQRREKNRIAAQKSRQRQTQKADTLHLES. The bZIP domain occupies 26-89; the sequence is DVRKVQRREK…KYFTSVLSSH (64 aa). The segment at 28–50 is basic motif; that stretch reads RKVQRREKNRIAAQKSRQRQTQK. S43 is subject to Phosphoserine. Phosphothreonine is present on T48. The leucine-zipper stretch occupies residues 54 to 75; sequence LHLESEDLEKQNAALRKEIKQL.

It belongs to the bZIP family. In terms of assembly, heterodimer; mainly heterodimerizes with JUNB. The BATF-JUNB heterodimer interacts with IRF4 and IRF8. Interacts (via bZIP domain) with IRF4 and IRF8; the interaction is direct. Also forms heterodimers with JUN and JUND. Interacts with IFI35. Phosphorylated on serine and threonine residues and at least one tyrosine residue. Phosphorylation at Ser-43 inhibit DNA binding activity and transforms it as a negative regulator of AP-1 mediated transcription.

Its subcellular location is the nucleus. The protein localises to the cytoplasm. Its function is as follows. AP-1 family transcription factor that controls the differentiation of lineage-specific cells in the immune system: specifically mediates the differentiation of T-helper 17 cells (Th17), follicular T-helper cells (TfH), CD8(+) dendritic cells and class-switch recombination (CSR) in B-cells. Acts via the formation of a heterodimer with JUNB that recognizes and binds DNA sequence 5'-TGA[CG]TCA-3'. The BATF-JUNB heterodimer also forms a complex with IRF4 (or IRF8) in immune cells, leading to recognition of AICE sequence (5'-TGAnTCA/GAAA-3'), an immune-specific regulatory element, followed by cooperative binding of BATF and IRF4 (or IRF8) and activation of genes. Controls differentiation of T-helper cells producing interleukin-17 (Th17 cells) by binding to Th17-associated gene promoters: regulates expression of the transcription factor RORC itself and RORC target genes such as IL17 (IL17A or IL17B). Also involved in differentiation of follicular T-helper cells (TfH) by directing expression of BCL6 and MAF. In B-cells, involved in class-switch recombination (CSR) by controlling the expression of both AICDA and of germline transcripts of the intervening heavy-chain region and constant heavy-chain region (I(H)-C(H)). Following infection, can participate in CD8(+) dendritic cell differentiation via interaction with IRF4 and IRF8 to mediate cooperative gene activation. Regulates effector CD8(+) T-cell differentiation by regulating expression of SIRT1. Following DNA damage, part of a differentiation checkpoint that limits self-renewal of hematopoietic stem cells (HSCs): up-regulated by STAT3, leading to differentiation of HSCs, thereby restricting self-renewal of HSCs. The sequence is that of Basic leucine zipper transcriptional factor ATF-like (BATF) from Bos taurus (Bovine).